The sequence spans 402 residues: MTKVSKERLKELEESGDVMELNLGPQHPSTHGVLRLKLRLEGEVVLSCDPVIGYLHTGVEKECESRTYHQVFTLVDRLDYLSGPAEEQAFAGALERLMNIEVPERAQTIRIILLELSRIASHLLWAGTSALELNMSSVFMYSFAEREKILDLFEQVSGARMFPSLWRIGGLAKDLNSDFISHLKEFISGFQKIWKELDRLLTDNFVWCKRLQGVAVIDQEICKQYMCTGPVLRASGISYDIRKAYPYLGYENYNFDIPTHIDGDSYARYLVRMEEMLQSISIIEQAIARLKPGVVLTNDRKVALPPRKELARSMEAVIHQFKLISEGLHPPVGSVYNCVESARGELGHYVISDGTPKPYRLRVRSPSFSHVEVLKKVLRGHVISDVVVAIASVDPILGDVDR.

Belongs to the complex I 49 kDa subunit family. In terms of assembly, NDH-1 is composed of 14 different subunits. Subunits NuoB, C, D, E, F, and G constitute the peripheral sector of the complex.

It localises to the cell inner membrane. It catalyses the reaction a quinone + NADH + 5 H(+)(in) = a quinol + NAD(+) + 4 H(+)(out). In terms of biological role, NDH-1 shuttles electrons from NADH, via FMN and iron-sulfur (Fe-S) centers, to quinones in the respiratory chain. The immediate electron acceptor for the enzyme in this species is believed to be ubiquinone. Couples the redox reaction to proton translocation (for every two electrons transferred, four hydrogen ions are translocated across the cytoplasmic membrane), and thus conserves the redox energy in a proton gradient. This chain is NADH-quinone oxidoreductase subunit D, found in Protochlamydia amoebophila (strain UWE25).